The chain runs to 288 residues: UDP-3-O-acyl-N-acetylglucosamine deacetylase (288 aa).

3 residues coordinate Zn(2+): histidine 79, histidine 236, and aspartate 240. Histidine 263 functions as the Proton donor in the catalytic mechanism.

It belongs to the LpxC family. The cofactor is Zn(2+).

The catalysed reaction is a UDP-3-O-[(3R)-3-hydroxyacyl]-N-acetyl-alpha-D-glucosamine + H2O = a UDP-3-O-[(3R)-3-hydroxyacyl]-alpha-D-glucosamine + acetate. The protein operates within glycolipid biosynthesis; lipid IV(A) biosynthesis; lipid IV(A) from (3R)-3-hydroxytetradecanoyl-[acyl-carrier-protein] and UDP-N-acetyl-alpha-D-glucosamine: step 2/6. Catalyzes the hydrolysis of UDP-3-O-myristoyl-N-acetylglucosamine to form UDP-3-O-myristoylglucosamine and acetate, the committed step in lipid A biosynthesis. The chain is UDP-3-O-acyl-N-acetylglucosamine deacetylase from Rickettsia felis (strain ATCC VR-1525 / URRWXCal2) (Rickettsia azadi).